Consider the following 247-residue polypeptide: Homeobox-leucine zipper protein HOX17 (247 aa).

Positions 58 to 81 (ERAGLRGGGGSDEEDGGCGIDGSR) are disordered. The segment at residues 79-138 (GSRKKLRLSKDQSAVLEDSFREHPTLNPRQKATLAQQLGLRPRQVEVWFQNRRARTKLKQ) is a DNA-binding region (homeobox). The leucine-zipper stretch occupies residues 137-182 (KQTEVDCEFLKRCCETLTEENRRLQKEVQELRALKLVSPHLYMNMS).

It belongs to the HD-ZIP homeobox family. Class II subfamily. In terms of tissue distribution, expressed in seedlings, roots, stems, leaf sheaths and blades and panicles.

The protein localises to the nucleus. In terms of biological role, probable transcription factor. This chain is Homeobox-leucine zipper protein HOX17 (HOX17), found in Oryza sativa subsp. indica (Rice).